The chain runs to 336 residues: MRLAVIAGDGIGPEVITEALKVLDAVLPGVEKTEYDLGARQYHKTGEVLPDSVLEELKGHDAILLGAIGDPSVPSGLLERGLLLRIRFELDHHINLRPARLYPGVQSPLAGNPEIDFVVVREGTEGPYTGNGGAIRVGTPHEIATEVSVNTAFGVRRAVQDAFGRAQQRRKHLTLVHKNNVLTNAGSLWWRTVQTVAAEYPDVEVAYQHVDAATIHMVTDPGRFDVIVTDNLFGDIITDLAAAVCGGIGLAASGNIDATLTHPSMFEPVHGSAPDIAGQGIADPTAAVMSVSLLLAHMAEVDAAARVDKAVAEHLATRGDEKLSTAAVGERILGKL.

Positions 87, 97, 121, and 211 each coordinate substrate. Aspartate 211, aspartate 235, and aspartate 239 together coordinate Mg(2+). An NAD(+)-binding site is contributed by 271–283; that stretch reads GSAPDIAGQGIAD.

Belongs to the isocitrate and isopropylmalate dehydrogenases family. LeuB type 2 subfamily. Homodimer. It depends on Mg(2+) as a cofactor. Requires Mn(2+) as cofactor.

It is found in the cytoplasm. The catalysed reaction is (2R,3S)-3-isopropylmalate + NAD(+) = 4-methyl-2-oxopentanoate + CO2 + NADH. It functions in the pathway amino-acid biosynthesis; L-leucine biosynthesis; L-leucine from 3-methyl-2-oxobutanoate: step 3/4. In terms of biological role, catalyzes the oxidation of 3-carboxy-2-hydroxy-4-methylpentanoate (3-isopropylmalate) to 3-carboxy-4-methyl-2-oxopentanoate. The product decarboxylates to 4-methyl-2 oxopentanoate. The protein is 3-isopropylmalate dehydrogenase of Mycolicibacterium vanbaalenii (strain DSM 7251 / JCM 13017 / BCRC 16820 / KCTC 9966 / NRRL B-24157 / PYR-1) (Mycobacterium vanbaalenii).